Reading from the N-terminus, the 512-residue chain is Putative aldehyde-dehydrogenase-like protein y4uC (512 aa).

Residues 14-41 form a disordered region; the sequence is MKPERGRRSPLPRRPTRPPDERSSGIGN. An NADP(+)-binding site is contributed by 266-271; sequence GGFATG. Active-site residues include Glu-286 and Cys-320.

This sequence belongs to the aldehyde dehydrogenase family.

The protein operates within amino-acid degradation; 4-aminobutanoate degradation. Its function is as follows. Could be a succinate-semialdehyde dehydrogenase (NADP(+)). The polypeptide is Putative aldehyde-dehydrogenase-like protein y4uC (Sinorhizobium fredii (strain NBRC 101917 / NGR234)).